The primary structure comprises 101 residues: Thrombin-like enzyme okinaxobin-1 (101 aa).

A signal peptide spans 1 to 16 (LIRVLANLLILQLSYA). Positions 17–22 (QKSSEL) are excised as a propeptide. Residues 23–101 (VIGGDECNIN…PKKKYFFRCR (79 aa)) form the Peptidase S1 domain. A disulfide bridge connects residues C50 and C66. H65 (charge relay system) is an active-site residue.

Belongs to the peptidase S1 family. Snake venom subfamily. Monomer. Glycosylated. In terms of tissue distribution, expressed by the venom gland.

The protein localises to the secreted. Strongly inactivated by diisopropylfluorophosphate (DFP) and phenylmethanesulfonyl fluoride (PMSF), and to a lesser extent by tosyl-L-lysine chloromethyl ketone (TLCK). In terms of biological role, thrombin-like snake venom serine protease that releases specifically fibrinopeptide B from fibrinogen (FGB) to form fibrin clots. Shows a preferential cleavage at Arg-|-Gly bonds in fibrinogen beta chains. Cleaves fibrinogen beta chains preferentially to alpha chains. The sequence is that of Thrombin-like enzyme okinaxobin-1 from Ovophis okinavensis (Ryukyu Island pit viper).